The sequence spans 296 residues: Pseudouridine-5'-phosphate glycosidase (296 aa).

The Proton donor role is filled by E21. Substrate contacts are provided by K81 and V101. Residue D130 participates in Mn(2+) binding. 132–134 contacts substrate; the sequence is SQD. Residue K151 is the Nucleophile of the active site.

This sequence belongs to the pseudouridine-5'-phosphate glycosidase family. Homotrimer. It depends on Mn(2+) as a cofactor.

The catalysed reaction is D-ribose 5-phosphate + uracil = psi-UMP + H2O. Catalyzes the reversible cleavage of pseudouridine 5'-phosphate (PsiMP) to ribose 5-phosphate and uracil. Functions biologically in the cleavage direction, as part of a pseudouridine degradation pathway. This chain is Pseudouridine-5'-phosphate glycosidase, found in Fervidobacterium nodosum (strain ATCC 35602 / DSM 5306 / Rt17-B1).